The following is a 207-amino-acid chain: Glycerol-3-phosphate acyltransferase 1 (207 aa).

A run of 5 helical transmembrane segments spans residues 3–23, 53–73, 85–105, 127–147, and 154–174; these read YVIASLLGYIFGCIHGSQIVG, IVVALIDIFKATAAIFLLLIL, HIYIYLTALFVIIGHNYPITM, IALIGIGVLILFTIATDYLAV, and ISFLITTYYIFGLAPFFIVVG.

The protein belongs to the PlsY family. Probably interacts with PlsX.

Its subcellular location is the cell membrane. It catalyses the reaction an acyl phosphate + sn-glycerol 3-phosphate = a 1-acyl-sn-glycero-3-phosphate + phosphate. The protein operates within lipid metabolism; phospholipid metabolism. Catalyzes the transfer of an acyl group from acyl-phosphate (acyl-PO(4)) to glycerol-3-phosphate (G3P) to form lysophosphatidic acid (LPA). This enzyme utilizes acyl-phosphate as fatty acyl donor, but not acyl-CoA or acyl-ACP. The sequence is that of Glycerol-3-phosphate acyltransferase 1 from Oceanobacillus iheyensis (strain DSM 14371 / CIP 107618 / JCM 11309 / KCTC 3954 / HTE831).